Here is a 305-residue protein sequence, read N- to C-terminus: Beta-carotene 3-hydroxylase, chloroplastic (305 aa).

A chloroplast-targeting transit peptide spans 1-41; that stretch reads MAFAMSSSLTLFQYQSFGKKPFFSRRRDFAGCSMMNPLVAR. 2 helical membrane passes run 98–118 and 129–149; these read YLVA…AAVY and AVPL…AVGM. In terms of domain architecture, Fatty acid hydroxylase spans 146–272; it reads AVGMEYWARW…KFNGVPYGLF (127 aa). A Histidine box-1 motif is present at residues 157–162; that stretch reads HRALWH. Positions 169-173 match the Histidine box-2 motif; it reads HESHH. A run of 2 helical transmembrane segments spans residues 184-204 and 207-227; these read DVFA…GFFH and FFSG…MAYM. Positions 230–235 match the Histidine box-3 motif; the sequence is HDGLVH. Positions 256-260 match the Histidine box-4 motif; the sequence is HQIHH.

This sequence belongs to the sterol desaturase family. In terms of assembly, homodimer. Expressed in flower buds and lips. Detected in roots and leaves.

It is found in the plastid. The protein resides in the chloroplast membrane. It catalyses the reaction all-trans-beta-carotene + 4 reduced [2Fe-2S]-[ferredoxin] + 2 O2 + 4 H(+) = all-trans-zeaxanthin + 4 oxidized [2Fe-2S]-[ferredoxin] + 2 H2O. Nonheme diiron monooxygenase involved in the biosynthesis of xanthophylls. Specific for beta-ring hydroxylations of beta-carotene. Uses ferredoxin as an electron donor. This Oncidium hybrid cultivar (Orchid) protein is Beta-carotene 3-hydroxylase, chloroplastic (BHY).